The chain runs to 280 residues: Protein synthesis inhibitor II (280 aa).

A1 carries the N-acetylalanine modification. E174 is an active-site residue.

Belongs to the ribosome-inactivating protein family. Type 1 RIP subfamily.

The protein localises to the cytoplasm. It catalyses the reaction Endohydrolysis of the N-glycosidic bond at one specific adenosine on the 28S rRNA.. Inhibits the elongation phase of protein synthesis. It inactivates fungal ribosomes even more effectively than mammalian ribosomes and is thought to function as a constitutive antifungal agent in plants. This Hordeum vulgare (Barley) protein is Protein synthesis inhibitor II (RIP30A).